Consider the following 380-residue polypeptide: 3-dehydroquinate synthase (380 aa).

This sequence belongs to the archaeal-type DHQ synthase family.

The catalysed reaction is 2-amino-2,3,7-trideoxy-D-lyxo-hept-6-ulosonate + NAD(+) + H2O = 3-dehydroquinate + NH4(+) + NADH + H(+). Its function is as follows. Catalyzes the oxidative deamination and cyclization of 2-amino-3,7-dideoxy-D-threo-hept-6-ulosonic acid (ADH) to yield 3-dehydroquinate (DHQ), which is fed into the canonical shikimic pathway of aromatic amino acid biosynthesis. The polypeptide is 3-dehydroquinate synthase (Methanosarcina barkeri (strain Fusaro / DSM 804)).